Reading from the N-terminus, the 404-residue chain is Coenzyme F420H(2) oxidase (404 aa).

Positions 84, 86, 88, 89, 152, 170, and 233 each coordinate Fe cation. Residues 259–399 (VTVIYDTMHH…ACFEAGRRLA (141 aa)) form the Flavodoxin-like domain. FMN is bound by residues 265 to 270 (TMHHST), 317 to 320 (AIYD), and 351 to 356 (SMGGRG).

This sequence in the N-terminal section; belongs to the zinc metallo-hydrolase group 3 family. FMN is required as a cofactor. The cofactor is Fe cation.

The enzyme catalyses 2 reduced coenzyme F420-(gamma-L-Glu)(n) + O2 = 2 oxidized coenzyme F420-(gamma-L-Glu)(n) + 2 H2O + 2 H(+). In terms of biological role, catalyzes the oxidation of F420H(2) with O(2). May be involved in O(2) detoxification, reducing the intracellular O(2) concentration to a level allowing growth at the expense of methane formation. This chain is Coenzyme F420H(2) oxidase, found in Methanothermobacter thermautotrophicus (strain ATCC 29096 / DSM 1053 / JCM 10044 / NBRC 100330 / Delta H) (Methanobacterium thermoautotrophicum).